Here is a 229-residue protein sequence, read N- to C-terminus: Urease accessory protein UreF (229 aa).

This sequence belongs to the UreF family. In terms of assembly, ureD, UreF and UreG form a complex that acts as a GTP-hydrolysis-dependent molecular chaperone, activating the urease apoprotein by helping to assemble the nickel containing metallocenter of UreC. The UreE protein probably delivers the nickel.

It is found in the cytoplasm. Required for maturation of urease via the functional incorporation of the urease nickel metallocenter. The sequence is that of Urease accessory protein UreF from Staphylococcus aureus (strain bovine RF122 / ET3-1).